A 411-amino-acid polypeptide reads, in one-letter code: MLDTIESYIKSHKEKENLYVKKNVSIIGSPLAAGQPLGGVQLACDDLRKLGLHNVIDVLGWKYEDIGNIDNGDNEMKQEKKTNNYINNNDNNNDNNNDNNNDNNNNCYIPNGVIKEKKHDLSNNKMNGYVNHNFYGNYEENNVISTNDKYKNNCYYDNIRNIKEIGIFSKNLFDTMSNELRKKNFVLNIGGDHGVAFSSILSSLQMYQNLRVIWIDAHGDINIPETSPSGNYHGMTLAHTLGLFKKKVPYFEWSENLTYLKPENTAIIGIRDIDAYEKIILKKCNINYYTIFDIEKNGIYNTICTALEKIDPNSNCPIHISLDIDSVDNVFAPGTGTVAKGGLNYREINLLMKILAETKRVVSMDLVEYNPSLDEVDKKVHGDSLPILDNATKTGKLCLELIARVLGYDIV.

A disordered region spans residues N83–N106. Positions 193, 216, 218, and 220 each coordinate Mn(2+). 3 residues coordinate L-arginine: N222, S229, and D274. Mn(2+) contacts are provided by D323 and D325.

Belongs to the arginase family. Homotrimer; oligomerization is dependent on Mn(2+) binding. Mn(2+) is required as a cofactor.

The enzyme catalyses L-arginine + H2O = urea + L-ornithine. It functions in the pathway nitrogen metabolism; urea cycle; L-ornithine and urea from L-arginine: step 1/1. Feedback inhibition by product L-ornithine,. Inhibited by 2(S)-amino-6-boronohexanoic acid (ABH); however, with less efficiency than human ARG1. In terms of biological role, catalyzes the hydrolysis of L-arginine into urea and L-ornithine, which is a precursor for polyamine biosynthesis. May play a role in parasite intra-hepatic development during the host liver stage. The chain is Arginase from Plasmodium falciparum (isolate 3D7).